Reading from the N-terminus, the 200-residue chain is MMSKQNKKDWKKFKDEHKEEHKVENEILEEETDEESQHQEPALGHPSYTALEEQLTLAEQKAHENWEKSVRALAELENVRRRMEREVANAHKYGVEKLISALLPVVDSLEQALQLADKNSDPSMHEGLELTMKLFLDALQKFDVEQIDPLGQTFDPQQHEAMSMQPAPGAPPNSVITVFQKGYKLSDRVIRPARVIVSTK.

Residues 1-25 (MMSKQNKKDWKKFKDEHKEEHKVEN) are compositionally biased toward basic and acidic residues. Residues 1 to 52 (MMSKQNKKDWKKFKDEHKEEHKVENEILEEETDEESQHQEPALGHPSYTALE) are disordered.

Belongs to the GrpE family. As to quaternary structure, homodimer.

The protein localises to the cytoplasm. Its function is as follows. Participates actively in the response to hyperosmotic and heat shock by preventing the aggregation of stress-denatured proteins, in association with DnaK and GrpE. It is the nucleotide exchange factor for DnaK and may function as a thermosensor. Unfolded proteins bind initially to DnaJ; upon interaction with the DnaJ-bound protein, DnaK hydrolyzes its bound ATP, resulting in the formation of a stable complex. GrpE releases ADP from DnaK; ATP binding to DnaK triggers the release of the substrate protein, thus completing the reaction cycle. Several rounds of ATP-dependent interactions between DnaJ, DnaK and GrpE are required for fully efficient folding. The polypeptide is Protein GrpE (Legionella pneumophila subsp. pneumophila (strain Philadelphia 1 / ATCC 33152 / DSM 7513)).